A 302-amino-acid polypeptide reads, in one-letter code: Zinc import ATP-binding protein ZnuC (302 aa).

The 216-residue stretch at 13-228 folds into the ABC transporter domain; the sequence is VSLANAGVRR…PEYLKLFGRR (216 aa). Residue 45–52 participates in ATP binding; that stretch reads GPNGSGKS.

The protein belongs to the ABC transporter superfamily. Zinc importer (TC 3.A.1.15.5) family. In terms of assembly, the complex is composed of two ATP-binding proteins (ZnuC), two transmembrane proteins (ZnuB) and a solute-binding protein (ZnuA).

The protein localises to the cell inner membrane. The enzyme catalyses Zn(2+)(out) + ATP(in) + H2O(in) = Zn(2+)(in) + ADP(in) + phosphate(in) + H(+)(in). Part of the ABC transporter complex ZnuABC involved in zinc import. Responsible for energy coupling to the transport system. The protein is Zinc import ATP-binding protein ZnuC of Rhizobium meliloti (strain 1021) (Ensifer meliloti).